The primary structure comprises 369 residues: Protein RecA (369 aa).

77 to 84 is a binding site for ATP; the sequence is GPESSGKT.

The protein belongs to the RecA family.

The protein resides in the cytoplasm. Can catalyze the hydrolysis of ATP in the presence of single-stranded DNA, the ATP-dependent uptake of single-stranded DNA by duplex DNA, and the ATP-dependent hybridization of homologous single-stranded DNAs. It interacts with LexA causing its activation and leading to its autocatalytic cleavage. In Corynebacterium pseudotuberculosis (strain C231), this protein is Protein RecA.